The following is a 259-amino-acid chain: Triosephosphate isomerase (259 aa).

10 to 12 (NWK) contacts substrate. The Electrophile role is filled by His-102. Catalysis depends on Glu-174, which acts as the Proton acceptor. Substrate is bound by residues Gly-180, Ser-220, and 241-242 (GG).

Belongs to the triosephosphate isomerase family. Homodimer.

It is found in the cytoplasm. It carries out the reaction D-glyceraldehyde 3-phosphate = dihydroxyacetone phosphate. The protein operates within carbohydrate biosynthesis; gluconeogenesis. It functions in the pathway carbohydrate degradation; glycolysis; D-glyceraldehyde 3-phosphate from glycerone phosphate: step 1/1. Its function is as follows. Involved in the gluconeogenesis. Catalyzes stereospecifically the conversion of dihydroxyacetone phosphate (DHAP) to D-glyceraldehyde-3-phosphate (G3P). The polypeptide is Triosephosphate isomerase (Cutibacterium acnes (strain DSM 16379 / KPA171202) (Propionibacterium acnes)).